We begin with the raw amino-acid sequence, 180 residues long: Cytidylate kinase (180 aa).

ATP is bound at residue 7-15 (GPPGSGTTT).

Belongs to the cytidylate kinase family. Type 2 subfamily.

It localises to the cytoplasm. The catalysed reaction is CMP + ATP = CDP + ADP. It catalyses the reaction dCMP + ATP = dCDP + ADP. This Archaeoglobus fulgidus (strain ATCC 49558 / DSM 4304 / JCM 9628 / NBRC 100126 / VC-16) protein is Cytidylate kinase (cmk).